Here is a 562-residue protein sequence, read N- to C-terminus: Wee1-like protein kinase 2 (562 aa).

2 disordered regions span residues methionine 1 to valine 86 and tyrosine 161 to serine 181. A compositionally biased stretch (polar residues) spans histidine 35–alanine 48. A Protein kinase domain is found at phenylalanine 217–valine 491. ATP is bound by residues isoleucine 223–valine 231 and lysine 246. Aspartate 344 acts as the Proton acceptor in catalysis. Residues asparagine 349 and aspartate 381 each coordinate Mg(2+). Positions alanine 494–leucine 520 form a coiled coil.

The protein belongs to the protein kinase superfamily. Ser/Thr protein kinase family. WEE1 subfamily.

The protein resides in the nucleus. The catalysed reaction is L-tyrosyl-[protein] + ATP = O-phospho-L-tyrosyl-[protein] + ADP + H(+). In terms of biological role, oocyte-specific protein tyrosine kinase that phosphorylates and inhibits cdk1 and acts as a regulator of meiosis. Required to maintain meiotic arrest in oocytes by phosphorylating cdk1 at 'Tyr-15', leading to inhibit cdk1 activity and prevent meiotic reentry. The protein is Wee1-like protein kinase 2 (wee2) of Xenopus tropicalis (Western clawed frog).